The following is a 195-amino-acid chain: Xanthine phosphoribosyltransferase (195 aa).

Xanthine is bound by residues Leu20 and Asn27. Residue 128–132 coordinates 5-phospho-alpha-D-ribose 1-diphosphate; sequence ANGQA. Residue Lys156 participates in xanthine binding.

It belongs to the purine/pyrimidine phosphoribosyltransferase family. Xpt subfamily. In terms of assembly, homodimer.

It is found in the cytoplasm. It carries out the reaction XMP + diphosphate = xanthine + 5-phospho-alpha-D-ribose 1-diphosphate. It participates in purine metabolism; XMP biosynthesis via salvage pathway; XMP from xanthine: step 1/1. In terms of biological role, converts the preformed base xanthine, a product of nucleic acid breakdown, to xanthosine 5'-monophosphate (XMP), so it can be reused for RNA or DNA synthesis. This Lactiplantibacillus plantarum (strain ATCC BAA-793 / NCIMB 8826 / WCFS1) (Lactobacillus plantarum) protein is Xanthine phosphoribosyltransferase.